Here is a 252-residue protein sequence, read N- to C-terminus: 2-succinyl-6-hydroxy-2,4-cyclohexadiene-1-carboxylate synthase (252 aa).

This sequence belongs to the AB hydrolase superfamily. MenH family. Monomer.

The enzyme catalyses 5-enolpyruvoyl-6-hydroxy-2-succinyl-cyclohex-3-ene-1-carboxylate = (1R,6R)-6-hydroxy-2-succinyl-cyclohexa-2,4-diene-1-carboxylate + pyruvate. It participates in quinol/quinone metabolism; 1,4-dihydroxy-2-naphthoate biosynthesis; 1,4-dihydroxy-2-naphthoate from chorismate: step 3/7. Its pathway is quinol/quinone metabolism; menaquinone biosynthesis. Catalyzes a proton abstraction reaction that results in 2,5-elimination of pyruvate from 2-succinyl-5-enolpyruvyl-6-hydroxy-3-cyclohexene-1-carboxylate (SEPHCHC) and the formation of 2-succinyl-6-hydroxy-2,4-cyclohexadiene-1-carboxylate (SHCHC). In Klebsiella pneumoniae subsp. pneumoniae (strain ATCC 700721 / MGH 78578), this protein is 2-succinyl-6-hydroxy-2,4-cyclohexadiene-1-carboxylate synthase.